Consider the following 158-residue polypeptide: Phosphopantetheine adenylyltransferase (158 aa).

Residue Thr-10 participates in substrate binding. Residues 10–11 and His-18 each bind ATP; that span reads TF. Positions 42, 74, and 88 each coordinate substrate. ATP is bound by residues 89–91, Glu-99, and 124–130; these read GLR and NSFISST.

It belongs to the bacterial CoaD family. As to quaternary structure, homohexamer. It depends on Mg(2+) as a cofactor.

The protein localises to the cytoplasm. The enzyme catalyses (R)-4'-phosphopantetheine + ATP + H(+) = 3'-dephospho-CoA + diphosphate. The protein operates within cofactor biosynthesis; coenzyme A biosynthesis; CoA from (R)-pantothenate: step 4/5. Its function is as follows. Reversibly transfers an adenylyl group from ATP to 4'-phosphopantetheine, yielding dephospho-CoA (dPCoA) and pyrophosphate. The sequence is that of Phosphopantetheine adenylyltransferase from Shewanella woodyi (strain ATCC 51908 / MS32).